Here is a 451-residue protein sequence, read N- to C-terminus: Ribosomal protein uS12 methylthiotransferase RimO (451 aa).

Residues 17 to 127 (PTIGFVSLGC…VLAQVHEHLP (111 aa)) form the MTTase N-terminal domain. Positions 26, 62, 91, 160, 164, and 167 each coordinate [4Fe-4S] cluster. One can recognise a Radical SAM core domain in the interval 146–383 (LTPRHYAYLK…MQLQQRISTE (238 aa)). In terms of domain architecture, TRAM spans 386–451 (KQKVGQTLPV…DEYDLWGTRV (66 aa)).

Belongs to the methylthiotransferase family. RimO subfamily. [4Fe-4S] cluster is required as a cofactor.

Its subcellular location is the cytoplasm. The catalysed reaction is L-aspartate(89)-[ribosomal protein uS12]-hydrogen + (sulfur carrier)-SH + AH2 + 2 S-adenosyl-L-methionine = 3-methylsulfanyl-L-aspartate(89)-[ribosomal protein uS12]-hydrogen + (sulfur carrier)-H + 5'-deoxyadenosine + L-methionine + A + S-adenosyl-L-homocysteine + 2 H(+). Functionally, catalyzes the methylthiolation of an aspartic acid residue of ribosomal protein uS12. This Cellvibrio japonicus (strain Ueda107) (Pseudomonas fluorescens subsp. cellulosa) protein is Ribosomal protein uS12 methylthiotransferase RimO.